The chain runs to 274 residues: Penicillin-insensitive murein endopeptidase (274 aa).

The N-terminal stretch at 1-19 (MNKTAIALLALLASSASLA) is a signal peptide. 3 disulfides stabilise this stretch: Cys44–Cys265, Cys187–Cys235, and Cys216–Cys223. Zn(2+) is bound by residues His110, His113, Asp120, Asp147, His150, and His211. The disordered stretch occupies residues 227–274 (PLPPPGDGCGAELQSWFEPPKPGTTKPEKKTPPPLPPSCQALLDEHVI).

Belongs to the peptidase M74 family. In terms of assembly, dimer. The cofactor is Zn(2+).

The protein localises to the periplasm. Murein endopeptidase that cleaves the D-alanyl-meso-2,6-diamino-pimelyl amide bond that connects peptidoglycan strands. Likely plays a role in the removal of murein from the sacculus. This Escherichia coli O1:K1 / APEC protein is Penicillin-insensitive murein endopeptidase.